The chain runs to 122 residues: Proximal tubules-expressed gene protein (122 aa).

A helical membrane pass occupies residues 33 to 53; that stretch reads WLTGLIAMTVFLFLVLVVYVA.

It belongs to the PDZK1-interacting protein 1/SMIM24 family. As to expression, expressed in prospective pronephric mesoderm at the late gastrula stage. After neurulation, expressed in the intermediate mesoderm, eye placode and blood islands. Expression becomes restricted to the pronephric proximal tubule during embryogenesis, but is absent from the connecting tubules.

It localises to the membrane. In terms of biological role, essential for pronephric tubule development, acting upstream of pax8 and lhx1/lim1 and downstream of retinoic acid signaling to induce pronephric mesoderm to form pronephric tubule-specific cells. This chain is Proximal tubules-expressed gene protein (pteg), found in Xenopus laevis (African clawed frog).